A 208-amino-acid chain; its full sequence is Small ribosomal subunit protein uS4 (208 aa).

The tract at residues 31 to 51 (SALDKRAYGPGQHGQRRAKTS) is disordered. Positions 98–156 (RRLDNVVYRMGFATTRSSARQLVTHGHVLVDGKRLDIPSYFVRSGQKIEIKEKTKSNPQ) constitute an S4 RNA-binding domain.

This sequence belongs to the universal ribosomal protein uS4 family. Part of the 30S ribosomal subunit. Contacts protein S5. The interaction surface between S4 and S5 is involved in control of translational fidelity.

Functionally, one of the primary rRNA binding proteins, it binds directly to 16S rRNA where it nucleates assembly of the body of the 30S subunit. With S5 and S12 plays an important role in translational accuracy. In Helicobacter pylori (strain HPAG1), this protein is Small ribosomal subunit protein uS4.